The chain runs to 233 residues: MYIDTGIMSNNIFLFAFFALVGLTRIEAMPTKGSEGTWDVDYEDQEHTGITCRENEHYNSTRIECEEECNDRNNKLCYRFQQFCWCNEGYIRNSSHICVKLEDCLKDEEQKSETLASSANNDSSKRLEDDLKLFSHDSVSHTSLEPETQAQKFNGIIDQETLDLVFGKPENSWAENKPLETKTQAQKFNGKIDQETLDLVFGKPKNSSAEKKPLETETQAQKFNGIIDQETLD.

The N-terminal stretch at methionine 1 to alanine 28 is a signal peptide. A TIL domain is found at cysteine 52–cysteine 104. A disordered region spans residues phenylalanine 201–aspartate 233.

The protein belongs to the polydnaviridae EGF-like motif protein family. Interacts with host PAP1 and PAP3.

Its function is as follows. Counteracts the host humoral immune response by inhibiting the processing and the amidolytic activity of host PAP3. Thereby, melanization of host hemolymph, normally producing several reactive intermediates toxic for viruses, is deregulated and proper immune response cannot occur. The polypeptide is Protease inhibitor Egf1.0 (O12) (Microplitis demolitor (Parasitoid wasp)).